The chain runs to 615 residues: RNA polymerase sigma factor RpoD (615 aa).

The segment at 166 to 216 (GYIDPDDGITPPAAEVPPPVDTKTAKADDDSEDEEAEATEDEEEAESGPDP) is disordered. The span at 194–212 (DDSEDEEAEATEDEEEAES) shows a compositional bias: acidic residues. Positions 381–451 (MVEANLRLVI…TRSIADQART (71 aa)) are sigma-70 factor domain-2. The Interaction with polymerase core subunit RpoC motif lies at 405-408 (DLIQ). Residues 460–536 (ETINKLNRIS…DSTMQSPIDV (77 aa)) form a sigma-70 factor domain-3 region. Residues 549–602 (VLSGLTAREAKVLRMRFGIDMNTDHTLEEVGKQFDVTRERIRQIEAKALRKLRH) are sigma-70 factor domain-4. A DNA-binding region (H-T-H motif) is located at residues 575–594 (LEEVGKQFDVTRERIRQIEA).

It belongs to the sigma-70 factor family. RpoD/SigA subfamily. Interacts transiently with the RNA polymerase catalytic core.

The protein resides in the cytoplasm. Its function is as follows. Sigma factors are initiation factors that promote the attachment of RNA polymerase to specific initiation sites and are then released. This sigma factor is the primary sigma factor during exponential growth. This chain is RNA polymerase sigma factor RpoD, found in Pseudomonas protegens (strain DSM 19095 / LMG 27888 / CFBP 6595 / CHA0).